We begin with the raw amino-acid sequence, 70 residues long: MSRLAPPLRLLQAPLKCWAVPKAHVSAKPARTPTSPMEQAVGLSVMFVSFLVPSGWVLSHLESYKKSSTT.

Residues 1–24 (MSRLAPPLRLLQAPLKCWAVPKAH) constitute a mitochondrion transit peptide. Over 25–35 (VSAKPARTPTS) the chain is Mitochondrial matrix. A helical transmembrane segment spans residues 36 to 59 (PMEQAVGLSVMFVSFLVPSGWVLS). The Mitochondrial intermembrane portion of the chain corresponds to 60–70 (HLESYKKSSTT).

This sequence belongs to the cytochrome c oxidase VIII family. In terms of assembly, component of the cytochrome c oxidase (complex IV, CIV), a multisubunit enzyme composed of 14 subunits. The complex is composed of a catalytic core of 3 subunits MT-CO1, MT-CO2 and MT-CO3, encoded in the mitochondrial DNA, and 11 supernumerary subunits COX4I, COX5A, COX5B, COX6A, COX6B, COX6C, COX7A, COX7B, COX7C, COX8 and NDUFA4, which are encoded in the nuclear genome. The complex exists as a monomer or a dimer and forms supercomplexes (SCs) in the inner mitochondrial membrane with NADH-ubiquinone oxidoreductase (complex I, CI) and ubiquinol-cytochrome c oxidoreductase (cytochrome b-c1 complex, complex III, CIII), resulting in different assemblies (supercomplex SCI(1)III(2)IV(1) and megacomplex MCI(2)III(2)IV(2)).

Its subcellular location is the mitochondrion inner membrane. The protein operates within energy metabolism; oxidative phosphorylation. Component of the cytochrome c oxidase, the last enzyme in the mitochondrial electron transport chain which drives oxidative phosphorylation. The respiratory chain contains 3 multisubunit complexes succinate dehydrogenase (complex II, CII), ubiquinol-cytochrome c oxidoreductase (cytochrome b-c1 complex, complex III, CIII) and cytochrome c oxidase (complex IV, CIV), that cooperate to transfer electrons derived from NADH and succinate to molecular oxygen, creating an electrochemical gradient over the inner membrane that drives transmembrane transport and the ATP synthase. Cytochrome c oxidase is the component of the respiratory chain that catalyzes the reduction of oxygen to water. Electrons originating from reduced cytochrome c in the intermembrane space (IMS) are transferred via the dinuclear copper A center (CU(A)) of subunit 2 and heme A of subunit 1 to the active site in subunit 1, a binuclear center (BNC) formed by heme A3 and copper B (CU(B)). The BNC reduces molecular oxygen to 2 water molecules using 4 electrons from cytochrome c in the IMS and 4 protons from the mitochondrial matrix. The sequence is that of Cytochrome c oxidase subunit 8B, mitochondrial (COX8B) from Carlito syrichta (Philippine tarsier).